Consider the following 280-residue polypeptide: Dihydropteroate synthase (280 aa).

A Pterin-binding domain is found at 1 to 265; the sequence is MSPAPVQVMG…DVRASVDAIK (265 aa). Position 13 (asparagine 13) interacts with Mg(2+). Residues aspartate 86, asparagine 105, aspartate 177, lysine 213, and 253–255 each bind (7,8-dihydropterin-6-yl)methyl diphosphate; that span reads RVH.

It belongs to the DHPS family. Homodimer. Requires Mg(2+) as cofactor.

It carries out the reaction (7,8-dihydropterin-6-yl)methyl diphosphate + 4-aminobenzoate = 7,8-dihydropteroate + diphosphate. It functions in the pathway cofactor biosynthesis; tetrahydrofolate biosynthesis; 7,8-dihydrofolate from 2-amino-4-hydroxy-6-hydroxymethyl-7,8-dihydropteridine diphosphate and 4-aminobenzoate: step 1/2. Its function is as follows. Catalyzes the condensation of para-aminobenzoate (pABA) with 6-hydroxymethyl-7,8-dihydropterin diphosphate (DHPt-PP) to form 7,8-dihydropteroate (H2Pte), the immediate precursor of folate derivatives. This Mycobacterium bovis (strain ATCC BAA-935 / AF2122/97) protein is Dihydropteroate synthase (folP1).